Consider the following 228-residue polypeptide: Protein crossbronx homolog (228 aa).

In terms of domain architecture, UBC core spans 14–168 (LQEYKILAEY…VEQCVEDSQR (155 aa)).

It belongs to the ubiquitin-conjugating enzyme family. FTS subfamily.

This chain is Protein crossbronx homolog, found in Anopheles gambiae (African malaria mosquito).